A 484-amino-acid polypeptide reads, in one-letter code: Probable cytosol aminopeptidase (484 aa).

Mn(2+) contacts are provided by Lys256 and Asp261. Lys268 is a catalytic residue. Mn(2+) is bound by residues Asp279, Asp338, and Glu340. Arg342 is an active-site residue.

Belongs to the peptidase M17 family. Requires Mn(2+) as cofactor.

It localises to the cytoplasm. It catalyses the reaction Release of an N-terminal amino acid, Xaa-|-Yaa-, in which Xaa is preferably Leu, but may be other amino acids including Pro although not Arg or Lys, and Yaa may be Pro. Amino acid amides and methyl esters are also readily hydrolyzed, but rates on arylamides are exceedingly low.. The catalysed reaction is Release of an N-terminal amino acid, preferentially leucine, but not glutamic or aspartic acids.. Functionally, presumably involved in the processing and regular turnover of intracellular proteins. Catalyzes the removal of unsubstituted N-terminal amino acids from various peptides. This Methylibium petroleiphilum (strain ATCC BAA-1232 / LMG 22953 / PM1) protein is Probable cytosol aminopeptidase.